Reading from the N-terminus, the 86-residue chain is Anti-adapter protein IraP (86 aa).

Residues 1-38 (MKNLIAELLVKLAQKEEEAKELTVQVEALEIVVTALLR) are a coiled coil.

Belongs to the IraP family. As to quaternary structure, interacts with RssB.

The protein localises to the cytoplasm. Its function is as follows. Inhibits RpoS proteolysis by regulating RssB activity, thereby increasing the stability of the sigma stress factor RpoS especially during phosphate starvation, but also in stationary phase and during nitrogen starvation. Its effect on RpoS stability is due to its interaction with RssB, which probably blocks the interaction of RssB with RpoS, and the consequent delivery of the RssB-RpoS complex to the ClpXP protein degradation pathway. This is Anti-adapter protein IraP from Klebsiella pneumoniae subsp. pneumoniae (strain ATCC 700721 / MGH 78578).